We begin with the raw amino-acid sequence, 296 residues long: Protease HtpX homolog (296 aa).

A run of 2 helical transmembrane segments spans residues 14-34 (VFLL…VGYL) and 38-58 (SLVT…VIMI). Residue His-144 coordinates Zn(2+). Glu-145 is an active-site residue. His-148 lines the Zn(2+) pocket. The next 2 helical transmembrane spans lie at 159–179 (IALA…NWWL) and 198–218 (LLVF…AAVI). Glu-227 contributes to the Zn(2+) binding site.

The protein belongs to the peptidase M48B family. Requires Zn(2+) as cofactor.

The protein localises to the cell membrane. The protein is Protease HtpX homolog of Leuconostoc citreum (strain KM20).